The sequence spans 227 residues: Cytidylate kinase (227 aa).

12–20 (GPSGAGKGT) contributes to the ATP binding site.

The protein belongs to the cytidylate kinase family. Type 1 subfamily.

The protein localises to the cytoplasm. It catalyses the reaction CMP + ATP = CDP + ADP. The enzyme catalyses dCMP + ATP = dCDP + ADP. The chain is Cytidylate kinase from Sodalis glossinidius (strain morsitans).